A 76-amino-acid polypeptide reads, in one-letter code: Acyl carrier protein (76 aa).

One can recognise a Carrier domain in the interval 1–76 (MATFDKVKDI…DVVNYIEQNQ (76 aa)). S36 carries the post-translational modification O-(pantetheine 4'-phosphoryl)serine.

Belongs to the acyl carrier protein (ACP) family. 4'-phosphopantetheine is transferred from CoA to a specific serine of apo-ACP by AcpS. This modification is essential for activity because fatty acids are bound in thioester linkage to the sulfhydryl of the prosthetic group.

The protein localises to the cytoplasm. The protein operates within lipid metabolism; fatty acid biosynthesis. Functionally, carrier of the growing fatty acid chain in fatty acid biosynthesis. The chain is Acyl carrier protein from Natranaerobius thermophilus (strain ATCC BAA-1301 / DSM 18059 / JW/NM-WN-LF).